A 355-amino-acid chain; its full sequence is uncharacterized protein (355 aa).

The next 3 helical transmembrane spans lie at 275 to 295 (SLIV…FVAF), 301 to 321 (WNSI…VVGV), and 330 to 350 (IAST…PLAL).

The protein to M.tuberculosis Rv0497.

Its subcellular location is the cell membrane. This is an uncharacterized protein from Mycobacterium leprae (strain TN).